The sequence spans 505 residues: Chromosomal replication initiator protein DnaA (505 aa).

The tract at residues 1-90 is domain I, interacts with DnaA modulators; the sequence is MSVELWQQCV…RRSSAPRAAP (90 aa). Positions 91-168 are domain II; it reads NAPVSAAVAA…QVEGALKHTS (78 aa). Residues 169–385 are domain III, AAA+ region; sequence YLNRTFTFDT…GALKRVIAHS (217 aa). ATP contacts are provided by Gly-213, Gly-215, Lys-216, and Thr-217. The interval 386-505 is domain IV, binds dsDNA; that stretch reads HFMGRDITIE…YKNLLRTLTT (120 aa).

The protein belongs to the DnaA family. In terms of assembly, oligomerizes as a right-handed, spiral filament on DNA at oriC.

It is found in the cytoplasm. Plays an essential role in the initiation and regulation of chromosomal replication. ATP-DnaA binds to the origin of replication (oriC) to initiate formation of the DNA replication initiation complex once per cell cycle. Binds the DnaA box (a 9 base pair repeat at the origin) and separates the double-stranded (ds)DNA. Forms a right-handed helical filament on oriC DNA; dsDNA binds to the exterior of the filament while single-stranded (ss)DNA is stabiized in the filament's interior. The ATP-DnaA-oriC complex binds and stabilizes one strand of the AT-rich DNA unwinding element (DUE), permitting loading of DNA polymerase. After initiation quickly degrades to an ADP-DnaA complex that is not apt for DNA replication. Binds acidic phospholipids. This Pseudomonas putida (strain ATCC 700007 / DSM 6899 / JCM 31910 / BCRC 17059 / LMG 24140 / F1) protein is Chromosomal replication initiator protein DnaA.